The chain runs to 194 residues: 7-methyl-GTP pyrophosphatase (194 aa).

The active-site Proton acceptor is the aspartate 70.

The protein belongs to the Maf family. YceF subfamily. It depends on a divalent metal cation as a cofactor.

The protein resides in the cytoplasm. It carries out the reaction N(7)-methyl-GTP + H2O = N(7)-methyl-GMP + diphosphate + H(+). Functionally, nucleoside triphosphate pyrophosphatase that hydrolyzes 7-methyl-GTP (m(7)GTP). May have a dual role in cell division arrest and in preventing the incorporation of modified nucleotides into cellular nucleic acids. The protein is 7-methyl-GTP pyrophosphatase of Ralstonia nicotianae (strain ATCC BAA-1114 / GMI1000) (Ralstonia solanacearum).